A 314-amino-acid chain; its full sequence is GTPase Era (314 aa).

One can recognise an Era-type G domain in the interval 7–188; that stretch reads RCGFAAVIGS…REFIAGLMPE (182 aa). The interval 15-22 is G1; that stretch reads GSPNAGKS. 15 to 22 lines the GTP pocket; sequence GSPNAGKS. The interval 41 to 45 is G2; sequence QTTRF. A G3 region spans residues 62–65; the sequence is DTPG. GTP is bound by residues 62–66 and 138–141; these read DTPGV and NKVD. The interval 138–141 is G4; sequence NKVD. The tract at residues 167–169 is G5; sequence ISA. Residues 219–296 enclose the KH type-2 domain; it reads LHEELPYASM…HLFLNVKVDA (78 aa).

Belongs to the TRAFAC class TrmE-Era-EngA-EngB-Septin-like GTPase superfamily. Era GTPase family. As to quaternary structure, monomer.

The protein localises to the cytoplasm. It is found in the cell inner membrane. An essential GTPase that binds both GDP and GTP, with rapid nucleotide exchange. Plays a role in 16S rRNA processing and 30S ribosomal subunit biogenesis and possibly also in cell cycle regulation and energy metabolism. The protein is GTPase Era of Maricaulis maris (strain MCS10) (Caulobacter maris).